A 576-amino-acid chain; its full sequence is Arginine--tRNA ligase (576 aa).

The 'HIGH' region signature appears at 122-132 (PNVAKEMHVGH).

The protein belongs to the class-I aminoacyl-tRNA synthetase family. Monomer.

Its subcellular location is the cytoplasm. It catalyses the reaction tRNA(Arg) + L-arginine + ATP = L-arginyl-tRNA(Arg) + AMP + diphosphate. The protein is Arginine--tRNA ligase of Sodalis glossinidius (strain morsitans).